The sequence spans 426 residues: Histidine--tRNA ligase (426 aa).

It belongs to the class-II aminoacyl-tRNA synthetase family. As to quaternary structure, homodimer.

Its subcellular location is the cytoplasm. It carries out the reaction tRNA(His) + L-histidine + ATP = L-histidyl-tRNA(His) + AMP + diphosphate + H(+). This Legionella pneumophila (strain Lens) protein is Histidine--tRNA ligase.